A 344-amino-acid chain; its full sequence is Lipase chaperone (344 aa).

A helical transmembrane segment spans residues 14–34 (AVVYGAVGLAAIAGVAMWSGA). Residues 37–78 (HGGTGASGEPPDASAARGPAAAPPQAAVPASTSLPPSLAGSS) form a disordered region. A compositionally biased stretch (low complexity) spans 43-78 (SGEPPDASAARGPAAAPPQAAVPASTSLPPSLAGSS).

This sequence belongs to the lipase chaperone family.

It localises to the cell inner membrane. In terms of biological role, may be involved in the folding of the extracellular lipase during its passage through the periplasm. This Burkholderia cepacia (Pseudomonas cepacia) protein is Lipase chaperone (lifO).